Consider the following 842-residue polypeptide: Elongation factor 2 (842 aa).

One can recognise a tr-type G domain in the interval 17–253; sequence TNVRNMSVIA…LWGDSYFNPK (237 aa). GTP-binding positions include 26 to 33, 158 to 161, and 213 to 215; these read AHVDHGKS, NKVD, and SGL. His699 bears the Diphthamide mark.

This sequence belongs to the TRAFAC class translation factor GTPase superfamily. Classic translation factor GTPase family. EF-G/EF-2 subfamily.

It is found in the cytoplasm. It carries out the reaction GTP + H2O = GDP + phosphate + H(+). In terms of biological role, catalyzes the GTP-dependent ribosomal translocation step during translation elongation. During this step, the ribosome changes from the pre-translocational (PRE) to the post-translocational (POST) state as the newly formed A-site-bound peptidyl-tRNA and P-site-bound deacylated tRNA move to the P and E sites, respectively. Catalyzes the coordinated movement of the two tRNA molecules, the mRNA and conformational changes in the ribosome. This is Elongation factor 2 (EFT1) from Komagataella pastoris (Yeast).